Here is a 423-residue protein sequence, read N- to C-terminus: Serine--tRNA ligase (423 aa).

Thr231–Glu233 serves as a coordination point for L-serine. Arg262–Glu264 is an ATP binding site. Glu285 lines the L-serine pocket. Glu349–Ser352 provides a ligand contact to ATP. Ser385 is a binding site for L-serine.

Belongs to the class-II aminoacyl-tRNA synthetase family. Type-1 seryl-tRNA synthetase subfamily. In terms of assembly, homodimer. The tRNA molecule binds across the dimer.

The protein localises to the cytoplasm. The catalysed reaction is tRNA(Ser) + L-serine + ATP = L-seryl-tRNA(Ser) + AMP + diphosphate + H(+). It catalyses the reaction tRNA(Sec) + L-serine + ATP = L-seryl-tRNA(Sec) + AMP + diphosphate + H(+). It functions in the pathway aminoacyl-tRNA biosynthesis; selenocysteinyl-tRNA(Sec) biosynthesis; L-seryl-tRNA(Sec) from L-serine and tRNA(Sec): step 1/1. In terms of biological role, catalyzes the attachment of serine to tRNA(Ser). Is also able to aminoacylate tRNA(Sec) with serine, to form the misacylated tRNA L-seryl-tRNA(Sec), which will be further converted into selenocysteinyl-tRNA(Sec). The sequence is that of Serine--tRNA ligase from Coxiella burnetii (strain CbuG_Q212) (Coxiella burnetii (strain Q212)).